Reading from the N-terminus, the 259-residue chain is Indole-3-glycerol phosphate synthase (259 aa).

This sequence belongs to the TrpC family.

The enzyme catalyses 1-(2-carboxyphenylamino)-1-deoxy-D-ribulose 5-phosphate + H(+) = (1S,2R)-1-C-(indol-3-yl)glycerol 3-phosphate + CO2 + H2O. The protein operates within amino-acid biosynthesis; L-tryptophan biosynthesis; L-tryptophan from chorismate: step 4/5. This Dehalococcoides mccartyi (strain ATCC BAA-2100 / JCM 16839 / KCTC 5957 / BAV1) protein is Indole-3-glycerol phosphate synthase.